The chain runs to 298 residues: Thymidylate synthase (298 aa).

DUMP contacts are provided by residues arginine 25 and 159 to 160 (RR). Cysteine 179 (nucleophile) is an active-site residue. DUMP contacts are provided by residues 200-203 (RSVD), asparagine 211, and 241-243 (HLY). Aspartate 203 serves as a coordination point for (6R)-5,10-methylene-5,6,7,8-tetrahydrofolate. (6R)-5,10-methylene-5,6,7,8-tetrahydrofolate is bound at residue alanine 297.

It belongs to the thymidylate synthase family. Bacterial-type ThyA subfamily. Homodimer.

The protein localises to the cytoplasm. The enzyme catalyses dUMP + (6R)-5,10-methylene-5,6,7,8-tetrahydrofolate = 7,8-dihydrofolate + dTMP. Its pathway is pyrimidine metabolism; dTTP biosynthesis. Its function is as follows. Catalyzes the reductive methylation of 2'-deoxyuridine-5'-monophosphate (dUMP) to 2'-deoxythymidine-5'-monophosphate (dTMP) while utilizing 5,10-methylenetetrahydrofolate (mTHF) as the methyl donor and reductant in the reaction, yielding dihydrofolate (DHF) as a by-product. This enzymatic reaction provides an intracellular de novo source of dTMP, an essential precursor for DNA biosynthesis. This chain is Thymidylate synthase, found in Cereibacter sphaeroides (strain ATCC 17025 / ATH 2.4.3) (Rhodobacter sphaeroides).